Here is a 1400-residue protein sequence, read N- to C-terminus: MNAISGGLNKVSFTNRKRIRKSFGRIPETTPMPNLIDVQRASYDAFLQMHVSPDSRTNSGLQEVFKSVFPIDDFAGRGRLEFVYYELEEPKYDVEECIQRGMTYAAPLKVVLRLIVWDVDEDTGARSIRDIKEQPVYMGDMPLMTDNGTFVVNGTERVIVSQMHRSPGVFFDHDKGKTHSSGKYLFAARVIPYRGSWLDFEFDAKDLIYVRIDRKRKLPVTTLLYALEGRATEALRAAREAKGESLEIGEIRGMDAEEILTYFYGKVPFTRTRTRDGETAWARPFEPETFRGAKLVEDLVDAETGEVVAKADDKLTARVARQIAVKTRTVLVSRADLIGRYVAEDLFDPNTGEIFADAGEEISEAKLKTFEDAGLDEIPTLAIDQAKGPWIRNTLAADKNASREDALIDIYRVIRPGEPPTSETAEALFRGLFFDAERYDLSAVGRVKMNMRLGLECEDTVRVLRKEDILRTIQIMCELKDGRGQVDDIDNLGNRRVRSVGELMENQYRIGLLRMERAIRERMGSVDIDGVMPHDLINAKPAAAAVREFFGSSQLSQFMDQTNPLSEVTHKRRLSALGPGGLTRERAGFEVRDVHPTHYGRICPIETPEGPNIGLINSLATFAKVNKYGFIETPYRLVKDGKVLDEYKYLSAMEEERLTVAQADAPKLADGTLTEDLVSVRRNGDFRLVKPDEVTAIDVSPRQLVSVAAALIPFLENDDANRALMGSNMQRQAVPLIKSDAPLVGTGMEAPVARDSGATIVARRAGVIDQIDGARIVVRATGEDGTTQGVDIYRLRKFMRSNQSTCINQRPLVRVGDRVGAGDIIADGPSTELGELALGRNVLCAFMPWNGYNFEDSILISERVAREDMFTSIHIEEFEVMARDTKLGQEEITRDIPNVGEEALRNLDEAGIVYIGAEVNPGDILVGKVTPKGESPMTPEEKLLRAIFGEKASDVRDTSLKLPPGVNGTVVDVRVFNRRGVDKDERALAIERAEIERLAKDRDDERAIQERAFLNRLREKLLGQVAGSGYKGVRSGTEITTELLAEIPRGAWRNLTVQDDRVMAEIETLKREFDASVHKLQQRFESKVEKLQRGDEMPPGVMKMVKVFIAVKRKLQPGDKMAGRHGNKGVVSKVVPIEDMPFLEDGTPVDVVLNPLGVPSRMNVGQILETHLGWACANLGRQIGEAVEAYQRDVAERERLHAMLKSVYGEEIYNEQIASMSDAELRELCGNIRKGVPIATPVFDGARITDIEDMLAKAGLDVSGQMTVCDGRTGEQFERKVTVGYMYMLKLGHMVDDKIHARSIGPYSLVTQQPLGGKAQFGGQRFGEMEVWALEAYGAAYTLQEMLTVKSDDVSGRTKVYEAIVREQDNFEAGVPESFNVLTKELKSLGLNVDLNLSVD.

Belongs to the RNA polymerase beta chain family. In terms of assembly, the RNAP catalytic core consists of 2 alpha, 1 beta, 1 beta' and 1 omega subunit. When a sigma factor is associated with the core the holoenzyme is formed, which can initiate transcription.

The catalysed reaction is RNA(n) + a ribonucleoside 5'-triphosphate = RNA(n+1) + diphosphate. Its function is as follows. DNA-dependent RNA polymerase catalyzes the transcription of DNA into RNA using the four ribonucleoside triphosphates as substrates. The protein is DNA-directed RNA polymerase subunit beta of Acidiphilium cryptum (strain JF-5).